Reading from the N-terminus, the 635-residue chain is Cilia- and flagella-associated protein 206 (635 aa).

This sequence belongs to the CFAP206 family.

The protein resides in the cytoplasm. Its subcellular location is the cytoskeleton. It is found in the cilium axoneme. May regulate cilium motility through its role in the assembly of the axonemal RS2 radial spoke. In Tetrahymena thermophila (strain SB210), this protein is Cilia- and flagella-associated protein 206.